A 242-amino-acid chain; its full sequence is Zinc import ATP-binding protein ZnuC (242 aa).

Positions 24-241 (INVKNLSFFY…EKFLKMFSSY (218 aa)) constitute an ABC transporter domain. ATP is bound at residue 56-63 (GPNGGGKT).

It belongs to the ABC transporter superfamily. Zinc importer (TC 3.A.1.15.5) family. In terms of assembly, the complex is composed of two ATP-binding proteins (ZnuC), two transmembrane proteins (ZnuB) and a solute-binding protein (ZnuA).

The protein localises to the cell inner membrane. It carries out the reaction Zn(2+)(out) + ATP(in) + H2O(in) = Zn(2+)(in) + ADP(in) + phosphate(in) + H(+)(in). Part of the ABC transporter complex ZnuABC involved in zinc import. Responsible for energy coupling to the transport system. The sequence is that of Zinc import ATP-binding protein ZnuC from Ehrlichia canis (strain Jake).